Here is a 208-residue protein sequence, read N- to C-terminus: Uracil phosphoribosyltransferase (208 aa).

5-phospho-alpha-D-ribose 1-diphosphate is bound by residues Arg-78, Arg-103, and 130–138 (DPMLATGGS). Uracil contacts are provided by residues Ile-193 and 198 to 200 (GDA). Asp-199 serves as a coordination point for 5-phospho-alpha-D-ribose 1-diphosphate.

Belongs to the UPRTase family. Mg(2+) serves as cofactor.

The enzyme catalyses UMP + diphosphate = 5-phospho-alpha-D-ribose 1-diphosphate + uracil. Its pathway is pyrimidine metabolism; UMP biosynthesis via salvage pathway; UMP from uracil: step 1/1. Its activity is regulated as follows. Allosterically activated by GTP. In terms of biological role, catalyzes the conversion of uracil and 5-phospho-alpha-D-ribose 1-diphosphate (PRPP) to UMP and diphosphate. The polypeptide is Uracil phosphoribosyltransferase (Actinobacillus pleuropneumoniae serotype 5b (strain L20)).